The following is a 509-amino-acid chain: UDP-N-acetylmuramoylalanine--D-glutamate ligase (509 aa).

Residue 116-122 participates in ATP binding; sequence GTNGKST.

This sequence belongs to the MurCDEF family.

The protein resides in the cytoplasm. The enzyme catalyses UDP-N-acetyl-alpha-D-muramoyl-L-alanine + D-glutamate + ATP = UDP-N-acetyl-alpha-D-muramoyl-L-alanyl-D-glutamate + ADP + phosphate + H(+). Its pathway is cell wall biogenesis; peptidoglycan biosynthesis. Its function is as follows. Cell wall formation. Catalyzes the addition of glutamate to the nucleotide precursor UDP-N-acetylmuramoyl-L-alanine (UMA). The polypeptide is UDP-N-acetylmuramoylalanine--D-glutamate ligase (Wolbachia pipientis wMel).